We begin with the raw amino-acid sequence, 884 residues long: E3 ubiquitin-protein ligase BRE1-like 1 (884 aa).

The tract at residues 1-37 (MGSTGEPDRKRRLSSSVAPGGGAPVSPAKRLAVAPTS) is disordered. Positions 49-86 (YKNQKLSEQLEAHKFEYRALENKFAGLKEKQRTHNETL) form a coiled coil. Positions 107–127 (KSGSPNSSPGSGHNNVQKDGT) are disordered. Low complexity predominate over residues 108–121 (SGSPNSSPGSGHNN). Coiled-coil stretches lie at residues 216–541 (LNNV…ELKL), 580–663 (SKLE…LQQI), 696–762 (RNLQ…QSLD), and 789–827 (KKRI…KEYR). Residues 832-871 (CGICHDRQKEVVITKCYHLFCNQCIQKSLGNRQRRCPSCS) form an RING-type zinc finger.

The protein belongs to the BRE1 family. Interacts with SKIPA. Interacts with HUB2.

The protein localises to the nucleus. The catalysed reaction is S-ubiquitinyl-[E2 ubiquitin-conjugating enzyme]-L-cysteine + [acceptor protein]-L-lysine = [E2 ubiquitin-conjugating enzyme]-L-cysteine + N(6)-ubiquitinyl-[acceptor protein]-L-lysine.. It participates in protein modification; protein ubiquitination. E3 ubiquitin-protein ligase that monoubiquitinates H2B to form H2BK143ub1. H2BK143ub1 gives a specific tag for epigenetic transcriptional activation and is a prerequisite for H3 Lys-4 methylation (H3K4me). It thereby plays a central role in histone code and gene regulation. H2B monoubiquitination (H2BK143ub1), mediated by HUB1, modulates transcriptional regulation of anther development, likely by promoting histone H3K4 dimethylation (H3K4me2) in the chromatin of the key tapetum degradation-related genes C4, CP1 and UDT1. This is E3 ubiquitin-protein ligase BRE1-like 1 from Oryza sativa subsp. japonica (Rice).